Reading from the N-terminus, the 397-residue chain is tRNA (guanine-N(7)-)-methyltransferase non-catalytic subunit wuho (397 aa).

WD repeat units lie at residues 75–115 (KVEV…AQLL), 163–202 (GHLS…DIHS), 206–244 (GHKE…ELLL), and 303–343 (AGTW…RASG).

Belongs to the WD repeat TRM82 family. As to quaternary structure, forms a heterodimer with the catalytic subunit Mettl1. Interacts with mei-P26 and weakly interacts with bgcn; required for the function or formation of the mei-P26-bgcn-bam-sxl complex. Interacts with nanos; may be involved in mei-P26-dependent derepression of the BMP signaling pathway. Interacts with Myc; the interaction may be mediated by mei-P26 and may be involved in the regulation of ribosome biogenesis. In testis, it is present at high level in hub cells, a niche for germline stem cells of testis. Ubiquitously expressed in all testicular cells throughout spermatogenesis. Ubiquitously expressed in all germline and somatic cells of the ovary.

The protein localises to the nucleus. It is found in the cytoplasm. It functions in the pathway tRNA modification; N(7)-methylguanine-tRNA biosynthesis. In terms of biological role, required for the Mettl1-dependent formation of N(7)-methylguanine at position 46 (m7G46) in tRNA. In the Mettl1-wuho methyltransferase complex, it is required to stabilize and induce conformational changes of the catalytic subunit. Required for binding of nanos mRNA and repression of translation by the mei-P26-bgcn-bam-sxl complex. May cooperate with mei-P26 and nanos to derepress the BMP signaling pathway. May cooperate with mei-P26 to suppress expression of a subset of microRNAs. May cooperate with mei-P26 to regulate bam expression levels in germline cells during gametogenesis. Required to promote mitosis to meiosis transition during gametogenesis. May regulate germline cell division in part by regulating ribosome biogenesis. The sequence is that of tRNA (guanine-N(7)-)-methyltransferase non-catalytic subunit wuho from Drosophila persimilis (Fruit fly).